A 465-amino-acid polypeptide reads, in one-letter code: Endo-1,3-1,4-beta-glycanase ExsH (465 aa).

Hemolysin-type calcium-binding repeat units lie at residues 33–50 (HGTA…VNVT), 105–122 (FGNE…TQTI), and 123–140 (DGRG…ADTF). Residues 206 to 462 (AHQFRLSLDR…YIKAYSLDAD (257 aa)) form the GH16 domain. The active-site Nucleophile is the E349. The active-site Proton donor is E354.

The protein belongs to the glycosyl hydrolase 16 family.

The protein localises to the secreted. Its pathway is glycan metabolism; exopolysaccharide biosynthesis. Cleaves high molecular weight succinoglycan to yield LMW succinoglycan. Dynamically regulates the molecular weight distribution of succinoglycan by cleaving nascent succinoglycan only during a limited period after its synthesis, perhaps before it undergoes a time-dependent change in its conformation or aggregation state. The protein is Endo-1,3-1,4-beta-glycanase ExsH (exsH) of Rhizobium meliloti (strain 1021) (Ensifer meliloti).